Here is a 194-residue protein sequence, read N- to C-terminus: NADH-quinone oxidoreductase subunit B 1 (194 aa).

Positions 47, 48, 113, and 142 each coordinate [4Fe-4S] cluster.

It belongs to the complex I 20 kDa subunit family. NDH-1 is composed of 14 different subunits. Subunits NuoB, C, D, E, F, and G constitute the peripheral sector of the complex. The cofactor is [4Fe-4S] cluster.

It is found in the cell inner membrane. The catalysed reaction is a quinone + NADH + 5 H(+)(in) = a quinol + NAD(+) + 4 H(+)(out). Functionally, NDH-1 shuttles electrons from NADH, via FMN and iron-sulfur (Fe-S) centers, to quinones in the respiratory chain. The immediate electron acceptor for the enzyme in this species is believed to be ubiquinone. Couples the redox reaction to proton translocation (for every two electrons transferred, four hydrogen ions are translocated across the cytoplasmic membrane), and thus conserves the redox energy in a proton gradient. This is NADH-quinone oxidoreductase subunit B 1 from Sorangium cellulosum (strain So ce56) (Polyangium cellulosum (strain So ce56)).